Reading from the N-terminus, the 431-residue chain is Argininosuccinate lyase (431 aa).

It belongs to the lyase 1 family. Argininosuccinate lyase subfamily.

It localises to the cytoplasm. The enzyme catalyses 2-(N(omega)-L-arginino)succinate = fumarate + L-arginine. It participates in amino-acid biosynthesis; L-arginine biosynthesis; L-arginine from L-ornithine and carbamoyl phosphate: step 3/3. The sequence is that of Argininosuccinate lyase from Stenotrophomonas maltophilia (strain R551-3).